Consider the following 177-residue polypeptide: Large ribosomal subunit protein uL6 (177 aa).

Belongs to the universal ribosomal protein uL6 family. In terms of assembly, part of the 50S ribosomal subunit.

Functionally, this protein binds to the 23S rRNA, and is important in its secondary structure. It is located near the subunit interface in the base of the L7/L12 stalk, and near the tRNA binding site of the peptidyltransferase center. In Bradyrhizobium sp. (strain BTAi1 / ATCC BAA-1182), this protein is Large ribosomal subunit protein uL6.